The sequence spans 80 residues: Translational regulator CsrA (80 aa).

The protein belongs to the CsrA/RsmA family. In terms of assembly, homodimer; the beta-strands of each monomer intercalate to form a hydrophobic core, while the alpha-helices form wings that extend away from the core.

It is found in the cytoplasm. Its function is as follows. A translational regulator that binds mRNA to regulate translation initiation and/or mRNA stability. Usually binds in the 5'-UTR at or near the Shine-Dalgarno sequence preventing ribosome-binding, thus repressing translation. Its main target seems to be the major flagellin gene, while its function is anatagonized by FliW. This Desulforamulus reducens (strain ATCC BAA-1160 / DSM 100696 / MI-1) (Desulfotomaculum reducens) protein is Translational regulator CsrA.